The sequence spans 377 residues: Sodium-dependent organic anion transporter (377 aa).

Residues 1–29 are Extracellular-facing; it reads MRANCSSSSACPANSSEEELPVGLEVHGN. N4 is a glycosylation site (N-linked (GlcNAc...) asparagine). A helical membrane pass occupies residues 30–50; sequence LELVFTVVSTVMMGLLMFSLG. Topologically, residues 51-67 are cytoplasmic; the sequence is CSVEIRKLWSHIRRPWG. A helical transmembrane segment spans residues 68-88; it reads IAVGLLCQFGLMPFTAYLLAI. Topologically, residues 89-97 are extracellular; it reads SFSLKPVQA. A helical transmembrane segment spans residues 98–118; sequence IAVLIMGCCPGGTISNIFTFW. Topologically, residues 119 to 133 are cytoplasmic; the sequence is VDGDMDLSISMTTCS. A helical transmembrane segment spans residues 134–154; the sequence is TVAALGMMPLCIYLYTWSWSL. Residues 155–159 are Extracellular-facing; sequence QQNLT. N157 carries N-linked (GlcNAc...) asparagine glycosylation. Residues 160 to 180 traverse the membrane as a helical segment; that stretch reads IPYQNIGITLVCLTIPVAFGV. Residues 181-195 lie on the Cytoplasmic side of the membrane; that stretch reads YVNYRWPKQSKIILK. A helical transmembrane segment spans residues 196–216; sequence IGAVVGGVLLLVVAVAGVVLA. Over 217-226 the chain is Extracellular; sequence KGSWNSDITL. Residues 227–247 form a helical membrane-spanning segment; that stretch reads LTISFIFPLIGHVTGFLLALF. At 248 to 266 the chain is on the cytoplasmic side; it reads THQSWQRCRTISLETGAQN. A helical transmembrane segment spans residues 267–285; it reads IQMCITMLQLSFTAEHLVQ. Over 286–290 the chain is Extracellular; the sequence is MLSFP. Residues 291–311 form a helical membrane-spanning segment; sequence LAYGLFQLIDGFLIVAAYQTY. Topologically, residues 312–377 are cytoplasmic; the sequence is KRRLKNKHGK…EPVGHITSCE (66 aa).

It belongs to the bile acid:sodium symporter (BASS) (TC 2.A.28) family. Glycosylated. In terms of tissue distribution, highly expressed in testis, placenta and pancreas. Moderately expressed in heart, lung and mammary gland. Weakly expressed in brain, colon, kidney, liver, ovary, prostate, small intestine, spleen and thymus.

The protein resides in the membrane. The catalysed reaction is estrone 3-sulfate(out) + 2 Na(+)(out) = estrone 3-sulfate(in) + 2 Na(+)(in). It catalyses the reaction 17beta-estradiol 3-sulfate(out) + 2 Na(+)(out) = 17beta-estradiol 3-sulfate(in) + 2 Na(+)(in). The enzyme catalyses dehydroepiandrosterone 3-sulfate(out) + 2 Na(+)(out) = dehydroepiandrosterone 3-sulfate(in) + 2 Na(+)(in). It carries out the reaction androst-5-ene-diol 3-sulfate(out) + 2 Na(+)(out) = androst-5-ene-diol 3-sulfate(in) + 2 Na(+)(in). The catalysed reaction is pregnenolone sulfate(out) + 2 Na(+)(out) = pregnenolone sulfate(in) + 2 Na(+)(in). It catalyses the reaction taurolithocholate 3-sulfate(out) + 2 Na(+)(out) = taurolithocholate 3-sulfate(in) + 2 Na(+)(in). The enzyme catalyses androsterone 3alpha-sulfate(out) + 2 Na(+)(out) = androsterone 3alpha-sulfate(in) + 2 Na(+)(in). It carries out the reaction 5alpha-dihydrotestosterone sulfate(out) + 2 Na(+)(out) = 5alpha-dihydrotestosterone sulfate(in) + 2 Na(+)(in). The catalysed reaction is 17beta-estradiol 17-sulfate(out) + 2 Na(+)(out) = 17beta-estradiol 17-sulfate(in) + 2 Na(+)(in). It catalyses the reaction 17alpha-hydroxypregnenolone 3-sulfate(out) + 2 Na(+)(out) = 17alpha-hydroxypregnenolone 3-sulfate(in) + 2 Na(+)(in). The enzyme catalyses epiandrosterone 3-sulfate(out) + 2 Na(+)(out) = epiandrosterone 3-sulfate(in) + 2 Na(+)(in). It carries out the reaction epitestosterone 17-sulfate(out) + 2 Na(+)(out) = epitestosterone 17-sulfate(in) + 2 Na(+)(in). The catalysed reaction is testosterone 17-sulfate(out) + 2 Na(+)(out) = testosterone 17-sulfate(in) + 2 Na(+)(in). It catalyses the reaction 16alpha-hydroxydehydroepiandrosterone 3-sulfate(out) + 2 Na(+)(out) = 16alpha-hydroxydehydroepiandrosterone 3-sulfate(in) + 2 Na(+)(in). Its function is as follows. Transports sulfoconjugated steroid hormones from the extracellular compartment into the cytosol in a sodium-dependent manner without hydrolysis. Steroid sulfate hormones are commonly considered to be biologically inactive metabolites, that may be activated by steroid sulfatases into free steroids. May play an important role by delivering sulfoconjugated steroids to specific target cells in reproductive organs. May play a role transporting the estriol precursor 16alpha-hydroxydehydroepiandrosterone 3-sulfate (16a-OH-DHEAS) at the fetal blood vessel endothelium. Can also transport other sulfoconjugated molecules such as taurolithocholic acid-3-sulfate and sulfoconjugated pyrenes. This is Sodium-dependent organic anion transporter (SLC10A6) from Homo sapiens (Human).